Consider the following 227-residue polypeptide: Cytochrome c oxidase subunit 2 (227 aa).

Residues 1 to 26 (MSTWKNLFLQDSASPLMELLMCFHDH) lie on the Mitochondrial intermembrane side of the membrane. Residues 27–48 (AMLILILITIMVSQMLLSMLFN) traverse the membrane as a helical segment. Residues 49-62 (KLSHRYLLEGQLIE) are Mitochondrial matrix-facing. A helical membrane pass occupies residues 63–82 (TIWTIIPAIILILIALPSLR). The Mitochondrial intermembrane segment spans residues 83 to 227 (LLYILDEINN…LFLNWVISKA (145 aa)). Cu cation contacts are provided by His161, Cys196, Glu198, Cys200, His204, and Met207. Position 198 (Glu198) interacts with Mg(2+).

The protein belongs to the cytochrome c oxidase subunit 2 family. In terms of assembly, component of the cytochrome c oxidase (complex IV, CIV), a multisubunit enzyme composed of a catalytic core of 3 subunits and several supernumerary subunits. The complex exists as a monomer or a dimer and forms supercomplexes (SCs) in the inner mitochondrial membrane with ubiquinol-cytochrome c oxidoreductase (cytochrome b-c1 complex, complex III, CIII). Cu cation serves as cofactor.

The protein resides in the mitochondrion inner membrane. It carries out the reaction 4 Fe(II)-[cytochrome c] + O2 + 8 H(+)(in) = 4 Fe(III)-[cytochrome c] + 2 H2O + 4 H(+)(out). Functionally, component of the cytochrome c oxidase, the last enzyme in the mitochondrial electron transport chain which drives oxidative phosphorylation. The respiratory chain contains 3 multisubunit complexes succinate dehydrogenase (complex II, CII), ubiquinol-cytochrome c oxidoreductase (cytochrome b-c1 complex, complex III, CIII) and cytochrome c oxidase (complex IV, CIV), that cooperate to transfer electrons derived from NADH and succinate to molecular oxygen, creating an electrochemical gradient over the inner membrane that drives transmembrane transport and the ATP synthase. Cytochrome c oxidase is the component of the respiratory chain that catalyzes the reduction of oxygen to water. Electrons originating from reduced cytochrome c in the intermembrane space (IMS) are transferred via the dinuclear copper A center (CU(A)) of subunit 2 and heme A of subunit 1 to the active site in subunit 1, a binuclear center (BNC) formed by heme A3 and copper B (CU(B)). The BNC reduces molecular oxygen to 2 water molecules using 4 electrons from cytochrome c in the IMS and 4 protons from the mitochondrial matrix. The sequence is that of Cytochrome c oxidase subunit 2 (COII) from Sitophilus granarius (Granary weevil).